A 141-amino-acid chain; its full sequence is Vasotocin-neurophysin VT (141 aa).

The cysteines at positions 1 and 6 are disulfide-linked. At Gly-9 the chain carries Glycine amide. 7 cysteine pairs are disulfide-bonded: Cys-22–Cys-66, Cys-25–Cys-39, Cys-33–Cys-56, Cys-40–Cys-46, Cys-73–Cys-85, Cys-79–Cys-97, and Cys-86–Cys-91. N-linked (GlcNAc...) asparagine glycosylation is present at Asn-117.

The protein belongs to the vasopressin/oxytocin family. Post-translationally, seven disulfide bonds are present in neurophysin.

It localises to the secreted. Its function is as follows. Vasotocin is an antidiuretic hormone. This Pelophylax lessonae (Pool frog) protein is Vasotocin-neurophysin VT.